A 701-amino-acid chain; its full sequence is Polyphosphate kinase (701 aa).

Residue asparagine 45 participates in ATP binding. Mg(2+)-binding residues include arginine 373 and arginine 403. The region spanning 428 to 462 is the PLD phosphodiesterase 1 domain; the sequence is PGMKIHAKLLLITRKEGDEFVRYAHIGTGNFHERT. The active-site Phosphohistidine intermediate is histidine 433. 3 residues coordinate ATP: tyrosine 466, arginine 562, and histidine 590. The PLD phosphodiesterase 2 domain maps to 585–615; that stretch reads DRFLEHPRVLVVHNDGNPQVFISSADWMERN.

It belongs to the polyphosphate kinase 1 (PPK1) family. Requires Mg(2+) as cofactor. An intermediate of this reaction is the autophosphorylated ppk in which a phosphate is covalently linked to a histidine residue through a N-P bond.

It carries out the reaction [phosphate](n) + ATP = [phosphate](n+1) + ADP. Functionally, catalyzes the reversible transfer of the terminal phosphate of ATP to form a long-chain polyphosphate (polyP). In Vibrio cholerae serotype O1 (strain ATCC 39315 / El Tor Inaba N16961), this protein is Polyphosphate kinase.